The chain runs to 290 residues: Phosphoribosylaminoimidazole-succinocarboxamide synthase (290 aa).

Belongs to the SAICAR synthetase family.

The catalysed reaction is 5-amino-1-(5-phospho-D-ribosyl)imidazole-4-carboxylate + L-aspartate + ATP = (2S)-2-[5-amino-1-(5-phospho-beta-D-ribosyl)imidazole-4-carboxamido]succinate + ADP + phosphate + 2 H(+). It functions in the pathway purine metabolism; IMP biosynthesis via de novo pathway; 5-amino-1-(5-phospho-D-ribosyl)imidazole-4-carboxamide from 5-amino-1-(5-phospho-D-ribosyl)imidazole-4-carboxylate: step 1/2. This is Phosphoribosylaminoimidazole-succinocarboxamide synthase from Haemophilus influenzae (strain PittGG).